Here is a 202-residue protein sequence, read N- to C-terminus: Peptide methionine sulfoxide reductase B1, chloroplastic (202 aa).

The transit peptide at 1–63 (MASSTRLTII…SSSPKPDNVQ (63 aa)) directs the protein to the chloroplast. Residues 48-67 (YSMGSSSSSPKPDNVQEAEK) form a disordered region. The MsrB domain occupies 75–197 (ENEWKKRLTP…NSAALKLNAL (123 aa)). Residues cysteine 114, cysteine 117, cysteine 163, and cysteine 166 each coordinate Zn(2+). The Nucleophile role is filled by cysteine 186.

The protein belongs to the MsrB Met sulfoxide reductase family. Zn(2+) serves as cofactor. In terms of tissue distribution, expressed at low levels in stems, leaves, floral buds, flowers and siliques (at protein level).

It localises to the plastid. Its subcellular location is the chloroplast. The enzyme catalyses L-methionyl-[protein] + [thioredoxin]-disulfide + H2O = L-methionyl-(R)-S-oxide-[protein] + [thioredoxin]-dithiol. Functionally, catalyzes the reduction of methionine sulfoxide (MetSO) to methionine in proteins. Specifically reduces the MetSO R-enantiomer. Plays a protective role against oxidative stress by restoring activity to proteins that have been inactivated by methionine oxidation. May play an essential function in association with MSRB2 in maintaining vegetative growth during environmental constraints, through the preservation of photosynthetic antennae. MSRB1 and MSRB2 account for most of the leaf peptide MSR capacity. The polypeptide is Peptide methionine sulfoxide reductase B1, chloroplastic (Arabidopsis thaliana (Mouse-ear cress)).